Consider the following 245-residue polypeptide: rRNA adenine N-6-methyltransferase (245 aa).

Positions 10, 12, 37, 58, 83, and 100 each coordinate S-adenosyl-L-methionine.

Belongs to the class I-like SAM-binding methyltransferase superfamily. rRNA adenine N(6)-methyltransferase family.

The catalysed reaction is adenosine(2085) in 23S rRNA + 2 S-adenosyl-L-methionine = N(6)-dimethyladenosine(2085) in 23S rRNA + 2 S-adenosyl-L-homocysteine + 2 H(+). Its function is as follows. This protein produces a dimethylation of the adenine residue at position 2085 in 23S rRNA, resulting in reduced affinity between ribosomes and macrolide-lincosamide-streptogramin B antibiotics. This is rRNA adenine N-6-methyltransferase (ermB) from Enterococcus faecalis (strain ATCC 700802 / V583).